A 200-amino-acid chain; its full sequence is Large ribosomal subunit protein uL4 (200 aa).

The segment at 38-68 (GRQGSKQQKTRSDVRGGGKRPWRQKGTGRAR) is disordered. A compositionally biased stretch (basic residues) spans 54 to 65 (GGKRPWRQKGTG).

It belongs to the universal ribosomal protein uL4 family. In terms of assembly, part of the 50S ribosomal subunit.

One of the primary rRNA binding proteins, this protein initially binds near the 5'-end of the 23S rRNA. It is important during the early stages of 50S assembly. It makes multiple contacts with different domains of the 23S rRNA in the assembled 50S subunit and ribosome. Functionally, forms part of the polypeptide exit tunnel. The chain is Large ribosomal subunit protein uL4 from Pseudomonas syringae pv. tomato (strain ATCC BAA-871 / DC3000).